The primary structure comprises 173 residues: MTTIVCVRKDGKVAIGGDGQATLGNSVEKGTVRKVRRTYKGKVVTGFAGSTADAFILLELFEKKLELHQGHLVKSAVELAKEWRTERSLRRLEAMMIVADETDFLLISGSGDVIEPEFDVLAIGSGGNYAKSAALALLRTENNLTAVEIVKEALTVAGDIDIYTNHNHIIEEI.

The active site involves Thr-2. Residues Gly-158, Asp-161, and Thr-164 each contribute to the Na(+) site.

It belongs to the peptidase T1B family. HslV subfamily. In terms of assembly, a double ring-shaped homohexamer of HslV is capped on each side by a ring-shaped HslU homohexamer. The assembly of the HslU/HslV complex is dependent on binding of ATP.

The protein resides in the cytoplasm. It catalyses the reaction ATP-dependent cleavage of peptide bonds with broad specificity.. Allosterically activated by HslU binding. Its function is as follows. Protease subunit of a proteasome-like degradation complex believed to be a general protein degrading machinery. This is ATP-dependent protease subunit HslV from Actinobacillus succinogenes (strain ATCC 55618 / DSM 22257 / CCUG 43843 / 130Z).